We begin with the raw amino-acid sequence, 192 residues long: NADH-quinone oxidoreductase subunit B (192 aa).

Residues Cys71, Cys72, Cys136, and Cys166 each contribute to the [4Fe-4S] cluster site.

The protein belongs to the complex I 20 kDa subunit family. As to quaternary structure, NDH-1 is composed of 14 different subunits. Subunits NuoB, C, D, E, F, and G constitute the peripheral sector of the complex. Requires [4Fe-4S] cluster as cofactor.

It is found in the cell inner membrane. The enzyme catalyses a quinone + NADH + 5 H(+)(in) = a quinol + NAD(+) + 4 H(+)(out). In terms of biological role, NDH-1 shuttles electrons from NADH, via FMN and iron-sulfur (Fe-S) centers, to quinones in the respiratory chain. The immediate electron acceptor for the enzyme in this species is believed to be ubiquinone. Couples the redox reaction to proton translocation (for every two electrons transferred, four hydrogen ions are translocated across the cytoplasmic membrane), and thus conserves the redox energy in a proton gradient. This is NADH-quinone oxidoreductase subunit B from Sinorhizobium medicae (strain WSM419) (Ensifer medicae).